Reading from the N-terminus, the 415-residue chain is Plasminogen activator inhibitor 2 (415 aa).

Cys5 and Cys405 form a disulfide bridge. 3 N-linked (GlcNAc...) asparagine glycosylation sites follow: Asn75, Asn115, and Asn339.

This sequence belongs to the serpin family. Ov-serpin subfamily. Interacts with PSMB1. Post-translationally, the signal sequence is not cleaved.

The protein localises to the cytoplasm. It is found in the secreted. It localises to the extracellular space. Inhibits urokinase-type plasminogen activator. The monocyte derived PAI-2 is distinct from the endothelial cell-derived PAI-1. This is Plasminogen activator inhibitor 2 (SERPINB2) from Homo sapiens (Human).